The primary structure comprises 349 residues: MNGTEGNNFYIPMSNRTGLVRSPYEYTQYYLADPWQFKALAFYMFFLICFGLPINVLTLLVTAQHKKLRQPLNYILVNLAFAGTIMAFFGFTVTFYCSINGYMALGPTGCAIEGFFATLGGQVALWSLVVLAIERYIVVCKPMGSFKFSSNHAMAGIAFTWVMASSCAVPPLFGWSRYIPEGMQTSCGPDYYTLNPEFNNESYVLYMFSCHFCVPVTTIFFTYGSLVCTVKAAAAQQQESESTQKAEREVTRMVILMVLGFLVAWVPYASFAAWIFFNRGAAFSAQAMAIPAFFSKASALFNPIIYVLLNKQFRSCMLNTLFCGKSPLGDDESSSVSTSKTEVSSVSPA.

The Extracellular segment spans residues 1-36; sequence MNGTEGNNFYIPMSNRTGLVRSPYEYTQYYLADPWQ. N-linked (GlcNAc...) asparagine glycans are attached at residues Asn2 and Asn15. The chain crosses the membrane as a helical span at residues 37-61; it reads FKALAFYMFFLICFGLPINVLTLLV. Over 62-73 the chain is Cytoplasmic; sequence TAQHKKLRQPLN. The helical transmembrane segment at 74–99 threads the bilayer; the sequence is YILVNLAFAGTIMAFFGFTVTFYCSI. Residues 100 to 113 lie on the Extracellular side of the membrane; the sequence is NGYMALGPTGCAIE. A disulfide bond links Cys110 and Cys187. The chain crosses the membrane as a helical span at residues 114-133; that stretch reads GFFATLGGQVALWSLVVLAI. At 134 to 152 the chain is on the cytoplasmic side; sequence ERYIVVCKPMGSFKFSSNH. A helical membrane pass occupies residues 153 to 176; it reads AMAGIAFTWVMASSCAVPPLFGWS. Residues 177-202 are Extracellular-facing; that stretch reads RYIPEGMQTSCGPDYYTLNPEFNNES. Asn200 is a glycosylation site (N-linked (GlcNAc...) asparagine). Residues 203–230 form a helical membrane-spanning segment; sequence YVLYMFSCHFCVPVTTIFFTYGSLVCTV. Residues 231–252 are Cytoplasmic-facing; the sequence is KAAAAQQQESESTQKAEREVTR. The chain crosses the membrane as a helical span at residues 253-276; it reads MVILMVLGFLVAWVPYASFAAWIF. At 277–284 the chain is on the extracellular side; it reads FNRGAAFS. A helical transmembrane segment spans residues 285-309; it reads AQAMAIPAFFSKASALFNPIIYVLL. At Lys296 the chain carries N6-(retinylidene)lysine. At 310 to 349 the chain is on the cytoplasmic side; that stretch reads NKQFRSCMLNTLFCGKSPLGDDESSSVSTSKTEVSSVSPA. Residues 328-349 are disordered; the sequence is LGDDESSSVSTSKTEVSSVSPA. The segment covering 334-349 has biased composition (low complexity); the sequence is SSVSTSKTEVSSVSPA.

It belongs to the G-protein coupled receptor 1 family. Opsin subfamily. Phosphorylated on some or all of the serine and threonine residues present in the C-terminal region.

It localises to the membrane. Functionally, visual pigments are the light-absorbing molecules that mediate vision. They consist of an apoprotein, opsin, covalently linked to cis-retinal. This is Green-sensitive opsin-2 (opn1mw2) from Danio rerio (Zebrafish).